A 78-amino-acid chain; its full sequence is WAP four-disulfide core domain protein 12 (78 aa).

Residues 1-21 form the signal peptide; the sequence is MWPNSILVLTVLLISSTLVTG. The region spanning 25–72 is the WAP domain; it reads KGAEKGVCPPDNVRCIRGEDPQCHNDNDCKDQKICCYWHCGFKCVQPV. Cystine bridges form between Cys32-Cys60, Cys39-Cys64, Cys47-Cys59, and Cys53-Cys68.

The protein localises to the secreted. Its function is as follows. Antibacterial protein. Putative acid-stable proteinase inhibitor. In Rattus norvegicus (Rat), this protein is WAP four-disulfide core domain protein 12.